Reading from the N-terminus, the 63-residue chain is Large ribosomal subunit protein bL32 (63 aa).

A disordered region spans residues 1 to 27 (MANPKAKMSKSRRDKRRAQFNARTKPV). Residues 7-18 (KMSKSRRDKRRA) are compositionally biased toward basic residues.

Belongs to the bacterial ribosomal protein bL32 family.

The protein is Large ribosomal subunit protein bL32 of Chlorobium phaeobacteroides (strain DSM 266 / SMG 266 / 2430).